The primary structure comprises 333 residues: Electron transfer flavoprotein subunit alpha, mitochondrial (333 aa).

Residues 1-19 (MFRAAAPGQLRRATSLLRF) constitute a mitochondrion transit peptide. The tract at residues 20-204 (QSTLVIAEHA…GISEWLDQKL (185 aa)) is domain I. K59 is modified (N6-acetyllysine; alternate). K59 carries the post-translational modification N6-succinyllysine; alternate. K62 carries the N6-acetyllysine modification. K69 is modified (N6-acetyllysine; alternate). K69 carries the post-translational modification N6-succinyllysine; alternate. At K75 the chain carries N6-acetyllysine. Residue K85 is modified to N6-acetyllysine; alternate. K85 carries the post-translational modification N6-succinyllysine; alternate. The residue at position 93 (T93) is a Phosphothreonine. An N6-acetyllysine mark is found at K101 and K139. The residue at position 140 (S140) is a Phosphoserine. K158 is subject to N6-acetyllysine; alternate. K158 carries the N6-succinyllysine; alternate modification. K164 is modified (N6-acetyllysine). At K187 the chain carries N6-succinyllysine. The residue at position 203 (K203) is an N6-acetyllysine; alternate. K203 bears the N6-succinyllysine; alternate mark. Positions 205–333 (TKSDRPELTG…PEMTELLKKK (129 aa)) are domain II. At K216 the chain carries N6-succinyllysine. R223 serves as a coordination point for FAD. N6-acetyllysine; alternate occurs at positions 226 and 232. Residues K226 and K232 each carry the N6-succinyllysine; alternate modification. FAD-binding positions include S248, 263 to 266 (VGQT), 281 to 286 (SGAIQH), and N300. K301 carries the post-translational modification N6-succinyllysine. 318-319 (DL) lines the FAD pocket.

It belongs to the ETF alpha-subunit/FixB family. Heterodimer composed of ETFA and ETFB. Identified in a complex that contains ETFA, ETFB and ETFRF1. Interaction with ETFRF1 promotes dissociation of the bound FAD and loss of electron transfer activity. Interacts with TASOR. The cofactor is FAD.

The protein localises to the mitochondrion matrix. Its function is as follows. Heterodimeric electron transfer flavoprotein that accepts electrons from several mitochondrial dehydrogenases, including acyl-CoA dehydrogenases, glutaryl-CoA and sarcosine dehydrogenase. It transfers the electrons to the main mitochondrial respiratory chain via ETF-ubiquinone oxidoreductase (ETF dehydrogenase). Required for normal mitochondrial fatty acid oxidation and normal amino acid metabolism. This Bos taurus (Bovine) protein is Electron transfer flavoprotein subunit alpha, mitochondrial (ETFA).